Consider the following 526-residue polypeptide: Na(+)/H(+) antiporter NhaB (526 aa).

A run of 11 helical transmembrane segments spans residues 14-34 (FLGY…LVNP), 63-83 (CYPL…GMTS), 99-119 (MLLV…LFVF), 122-142 (LLLR…AAAF), 146-166 (FLDA…FYGI), 206-226 (LLMH…VGEP), 239-259 (FVSF…CGIL), 307-327 (AVIG…VGLI), 357-377 (FTAL…QQLF), 451-471 (ATPN…APLI), and 479-499 (VIMA…CVEF).

Belongs to the NhaB Na(+)/H(+) (TC 2.A.34) antiporter family.

The protein resides in the cell inner membrane. The enzyme catalyses 2 Na(+)(in) + 3 H(+)(out) = 2 Na(+)(out) + 3 H(+)(in). In terms of biological role, na(+)/H(+) antiporter that extrudes sodium in exchange for external protons. The sequence is that of Na(+)/H(+) antiporter NhaB from Pectobacterium carotovorum subsp. carotovorum (strain PC1).